The following is a 251-amino-acid chain: Triosephosphate isomerase (251 aa).

Residue 9–11 (NWK) participates in substrate binding. His95 acts as the Electrophile in catalysis. Glu167 (proton acceptor) is an active-site residue. Substrate-binding positions include Gly173, Ser213, and 234 to 235 (GG).

It belongs to the triosephosphate isomerase family. In terms of assembly, homodimer.

The protein resides in the cytoplasm. It catalyses the reaction D-glyceraldehyde 3-phosphate = dihydroxyacetone phosphate. The protein operates within carbohydrate biosynthesis; gluconeogenesis. It functions in the pathway carbohydrate degradation; glycolysis; D-glyceraldehyde 3-phosphate from glycerone phosphate: step 1/1. Its function is as follows. Involved in the gluconeogenesis. Catalyzes stereospecifically the conversion of dihydroxyacetone phosphate (DHAP) to D-glyceraldehyde-3-phosphate (G3P). This Lactobacillus gasseri (strain ATCC 33323 / DSM 20243 / BCRC 14619 / CIP 102991 / JCM 1131 / KCTC 3163 / NCIMB 11718 / NCTC 13722 / AM63) protein is Triosephosphate isomerase.